Reading from the N-terminus, the 265-residue chain is MASLGKYVSKLAGSRVLVIGGSSGIGFGVAEAAIQNGASSVFISSSSQTKISSAIERLKENNQSAKAQLHGFPCNLGSPDTLTSEVENLFAEVAKSGKLDHVVFTAGDKLAVGKLEDFTLDAIRQAGTVRFFAPLVVAQQLRKHLDESGSSSFTVATGGATEHVSKDWSIMYSYLSGLRGMIRGLAVDLAPIRVNAVAQGPTDTEIWSYVKEMGYWDNVTGHLKGRMTTGEIGKVEDVVEAYLYLMKNKNTSGSVVETTGGTLLS.

The N-terminal stretch at 1-32 (MASLGKYVSKLAGSRVLVIGGSSGIGFGVAEA) is a signal peptide. The NADP(+) site is built by S22, S23, I25, S45, and K50. An N-linked (GlcNAc...) asparagine glycan is attached at N62. N88, R130, and T204 together coordinate NADP(+). 2 N-linked (GlcNAc...) asparagine glycosylation sites follow: N218 and N250.

This sequence belongs to the short-chain dehydrogenases/reductases (SDR) family.

Functionally, short-chain dehydrogenase/reductase; part of the gene cluster that mediates the biosynthesis of fusarubins, highly pigmented naphthoquinones responsible for the coloration of the fruiting bodies. The non-reducing polyketide synthase FSR1 is responsible for the condensation of seven acetyl-CoA units to yield a haptaketide. After rings A and B are formed by aldol-type cyclization, the PKS-derived product is released as 6-O-demethylfusarubinaldehyde. Then, two hydroxyl groups at C-5 and C-10 are incorporated by FSR3, and simultaneously hydroxyl groups at C-6 and C-8 are methylated by FSR2. The aldehyde is, on the one hand, reduced by FSR3 to 8-O-methylfusarubin alcohol, which equilibrates mainly with 8-O-methylfusarubin and only small amounts of 8-O-methylnectriafurone. On the other hand, the aldehyde can be oxidized to form 8-O-methylfusarubinic acid, a reaction driven by FSR3 equilibrating with 8-O-methylfusarubinlactone, finally resulting in 8-O-methylanhydrofusarubinlactol after a further reduction step and loss of water. 8-O-Methylfusarubinic acid can also undergo decarboxylation, resulting in 8-O-methyl-13-hydroxynorjavanicin after another hydroxylation step at C-13. Both steps are most likely also accomplished by FSR3. No enzymatic function has been determined so far for either FSR4 and FSR5. Their deletion does not alter the product spectrum, but the possibility that they catalyze specific enzymatic steps during perithecium development cannot be ruled out. FSR4 might possess a regulatory function in the biosynthesis of fusarubins. This Gibberella fujikuroi (strain CBS 195.34 / IMI 58289 / NRRL A-6831) (Bakanae and foot rot disease fungus) protein is Short-chain dehydrogenase/reductase fsr5.